Here is a 359-residue protein sequence, read N- to C-terminus: UPF0283 membrane protein RHECIAT_CH0002430 (359 aa).

The disordered stretch occupies residues 1-50; that stretch reads MSKPPSDPPRRPPAAFAYEDEASEPRNSGRQQQGRRKPESFSENIVVTPD. 2 consecutive transmembrane segments (helical) span residues 77–97 and 111–131; these read FGKI…GLWT and LGYA…ALVI.

The protein belongs to the UPF0283 family.

It localises to the cell inner membrane. The protein is UPF0283 membrane protein RHECIAT_CH0002430 of Rhizobium etli (strain CIAT 652).